We begin with the raw amino-acid sequence, 490 residues long: Cytochrome P450 71A22 (490 aa).

Residues 2 to 22 form a helical membrane-spanning segment; that stretch reads ESMIRIILLSLIIFITILFFI. Cys-432 serves as a coordination point for heme.

It belongs to the cytochrome P450 family. The cofactor is heme.

The protein localises to the membrane. The sequence is that of Cytochrome P450 71A22 (CYP71A22) from Arabidopsis thaliana (Mouse-ear cress).